The chain runs to 368 residues: 2-deoxy-scyllo-inosose synthase (368 aa).

Residues Asp42, 72-75 (EEYK), 104-108 (GLTGN), 128-129 (TT), 139-141 (SIK), 150-151 (KN), and Gln176 each bind NAD(+). Residue Lys141 is part of the active site. Glu183 contacts Co(2+). Glu243 is an active-site residue. Co(2+) contacts are provided by His246 and His262.

Belongs to the sugar phosphate cyclases superfamily. DOI synthase family. In terms of assembly, was isolated as a heterodimeric enzyme comprising of BtrC and a smaller polypeptide further identified as PdxT by sequence homology. Homodimer in solution. NAD(+) serves as cofactor. The cofactor is Co(2+).

The catalysed reaction is D-glucose 6-phosphate = 2-deoxy-L-scyllo-inosose + phosphate. It functions in the pathway metabolic intermediate biosynthesis; 2-deoxystreptamine biosynthesis; 2-deoxystreptamine from D-glucose 6-phosphate: step 1/4. It participates in antibiotic biosynthesis; butirosin biosynthesis. Its activity is regulated as follows. Strongly inhibited by EDTA, zinc and Cu(2+). Functionally, catalyzes the intramolecular carbocycle formation from D-glucose-6-phosphate to 2-deoxy-scyllo-inosose (DOI). The polypeptide is 2-deoxy-scyllo-inosose synthase (btrC) (Niallia circulans (Bacillus circulans)).